A 351-amino-acid chain; its full sequence is Dihydroorotate dehydrogenase (quinone) (351 aa).

Residues 67–71 (AGFDK) and T91 contribute to the FMN site. K71 serves as a coordination point for substrate. 116-120 (NAMGF) serves as a coordination point for substrate. FMN-binding residues include N145 and N178. N178 lines the substrate pocket. The active-site Nucleophile is S181. Substrate is bound at residue N183. FMN-binding residues include K214 and T242. Residue 243-244 (NT) participates in substrate binding. FMN-binding positions include G262, G291, and 312–313 (YT).

The protein belongs to the dihydroorotate dehydrogenase family. Type 2 subfamily. Monomer. The cofactor is FMN.

The protein localises to the cell membrane. It catalyses the reaction (S)-dihydroorotate + a quinone = orotate + a quinol. The protein operates within pyrimidine metabolism; UMP biosynthesis via de novo pathway; orotate from (S)-dihydroorotate (quinone route): step 1/1. Catalyzes the conversion of dihydroorotate to orotate with quinone as electron acceptor. This is Dihydroorotate dehydrogenase (quinone) from Nitratiruptor sp. (strain SB155-2).